The primary structure comprises 800 residues: Serine/threonine-protein kinase KIN4 (800 aa).

The Protein kinase domain occupies 46–313; the sequence is YIIGSTLGEG…LQTIKRHVWL (268 aa). Residues 52 to 60 and Lys-80 contribute to the ATP site; that span reads LGEGEFGKV. The active-site Proton acceptor is Asp-175. 2 disordered regions span residues 331-397 and 438-487; these read LQKE…GSKV and SARH…TSFT. A compositionally biased stretch (low complexity) spans 348–358; that stretch reads STYSSSASSYS. Phosphoserine is present on residues Ser-365 and Ser-388. 2 stretches are compositionally biased toward polar residues: residues 380–395 and 459–473; these read QLATSRPASPTFSTGS and GSPTTARTRNAPSSK. Phosphoserine is present on Ser-521. 2 disordered regions span residues 629-661 and 678-754; these read EPTNSTDEDHVESQLENVGHSSNKSDASSDKDS and SLNG…PGRS. Over residues 678–721 the composition is skewed to polar residues; the sequence is SLNGSRSTVESRTSKGNAPPVSSRNPSGQSNRSNIKITQQQPRN. Over residues 727–740 the composition is skewed to basic and acidic residues; it reads PNPDKKINDNRIRD. Ser-748 carries the phosphoserine modification.

Belongs to the protein kinase superfamily. Ser/Thr protein kinase family.

It carries out the reaction L-seryl-[protein] + ATP = O-phospho-L-seryl-[protein] + ADP + H(+). The enzyme catalyses L-threonyl-[protein] + ATP = O-phospho-L-threonyl-[protein] + ADP + H(+). Functionally, this protein is probably a serine/threonine protein kinase. The chain is Serine/threonine-protein kinase KIN4 (KIN4) from Saccharomyces cerevisiae (strain ATCC 204508 / S288c) (Baker's yeast).